The chain runs to 205 residues: Recombination protein RecR (205 aa).

A C4-type zinc finger spans residues 59 to 74 (CARCNTFCEGGLCDIC). One can recognise a Toprim domain in the interval 82–177 (RRLMVVHMPA…KVSRLSQGIP (96 aa)).

This sequence belongs to the RecR family.

Its function is as follows. May play a role in DNA repair. It seems to be involved in an RecBC-independent recombinational process of DNA repair. It may act with RecF and RecO. This chain is Recombination protein RecR, found in Neisseria gonorrhoeae (strain ATCC 700825 / FA 1090).